A 295-amino-acid chain; its full sequence is Ankyrin repeat and SOCS box protein 17 (295 aa).

An ANK repeat occupies 146-176; it reads SGITPLFYVAQTRQSNIFKILLQYGILEREK. Positions 232 to 295 constitute an SOCS box domain; the sequence is LGRRPIISNW…RLQNYLNLEI (64 aa).

The protein belongs to the ankyrin SOCS box (ASB) family.

The protein operates within protein modification; protein ubiquitination. Its function is as follows. May be a substrate-recognition component of a SCF-like ECS (Elongin-Cullin-SOCS-box protein) E3 ubiquitin-protein ligase complex which mediates the ubiquitination and subsequent proteasomal degradation of target proteins. This is Ankyrin repeat and SOCS box protein 17 (ASB17) from Macaca fascicularis (Crab-eating macaque).